We begin with the raw amino-acid sequence, 293 residues long: uncharacterized protein (293 aa).

It belongs to the TolB family.

This is an uncharacterized protein from Agrobacterium fabrum (strain C58 / ATCC 33970) (Agrobacterium tumefaciens (strain C58)).